Consider the following 269-residue polypeptide: Phosphatidylglycerol--prolipoprotein diacylglyceryl transferase (269 aa).

7 helical membrane-spanning segments follow: residues 10 to 30, 56 to 76, 91 to 111, 126 to 146, 172 to 192, 200 to 220, and 237 to 257; these read IAVSIGPISVHWYGIMYLIGF, AIFYGALGVILGGRVGYILFY, IWEGGMSFHGGLLGVIIAMFF, FLAPFVPIGLGAGRLGNFIGG, PSQLYQFALEGVALFCILWFF, YCVSGMFLLFYGIFRILVEFV, and EGQLLSLPMVIIGAGLIMAGL. Residue Arg-139 coordinates a 1,2-diacyl-sn-glycero-3-phospho-(1'-sn-glycerol).

Belongs to the Lgt family.

It localises to the cell inner membrane. It carries out the reaction L-cysteinyl-[prolipoprotein] + a 1,2-diacyl-sn-glycero-3-phospho-(1'-sn-glycerol) = an S-1,2-diacyl-sn-glyceryl-L-cysteinyl-[prolipoprotein] + sn-glycerol 1-phosphate + H(+). It participates in protein modification; lipoprotein biosynthesis (diacylglyceryl transfer). Its function is as follows. Catalyzes the transfer of the diacylglyceryl group from phosphatidylglycerol to the sulfhydryl group of the N-terminal cysteine of a prolipoprotein, the first step in the formation of mature lipoproteins. The sequence is that of Phosphatidylglycerol--prolipoprotein diacylglyceryl transferase from Marinomonas sp. (strain MWYL1).